A 568-amino-acid polypeptide reads, in one-letter code: MMPATLAGLALAVTVATMFAQRVDSTTIHHVSGLKGKPLLFGPSLRRTLPAGGTFKWVLVLSDPCAPKPTEICVSVGHCFYDLVSSDNDSECANKDRRVLTLALLTKSKTGELRVIGPMAASSALVGDAGELEQLRRRVSAGMGLTDDGDISFAAADKVNEGLYGVRVMGSGDSYTFFNVTVATETAGDDRDLATVRHVDIAHNIVPSEDRDHVFVSMPRMHVAWPHGTTVLHPKMIIAAASWRPEYNFTYEWYAVPYDGYCATMRLFEACLYHPSAPACLDPAGHRGCVVGTMTHDDLVGRVLMARCRGSDLRTCEPHVIHIKQKPMVSLGRAVPELRVESAAHIPSLYILVVKIDDSVAGWAYTELMAEGSSPRVVIDIHMPRPTSAQGGIAALREIENDDSAPSLGSNEGGGPGNSKRRAAVLGAAVWIALTLLILGGLGAYVAVNKKCLRDKRQWLRGSRKPTLETHAHTYTSLPVGGDLSLEQDAEDEDEDEEELLYERERRRSSSGSKKSSRSPSRRSSRRNSFGPTLSANALSRFDKTVKLAMAEVAGRLLANKTFPSQRY.

The N-terminal stretch at 1–20 (MMPATLAGLALAVTVATMFA) is a signal peptide. The Virion surface segment spans residues 21-422 (QRVDSTTIHH…GGGPGNSKRR (402 aa)). Residues asparagine 88, asparagine 179, and asparagine 248 are each glycosylated (N-linked (GlcNAc...) asparagine; by host). Residues cysteine 271 and cysteine 280 are joined by a disulfide bond. The chain crosses the membrane as a helical span at residues 423 to 443 (AAVLGAAVWIALTLLILGGLG). The Intravirion segment spans residues 444–568 (AYVAVNKKCL…ANKTFPSQRY (125 aa)). An Internalization motif motif is present at residues 465–468 (KPTL). Residues 470-534 (THAHTYTSLP…SRRNSFGPTL (65 aa)) form a disordered region. Residues 482–497 (GDLSLEQDAEDEDEDE) are acidic. Positions 486–500 (LEQDAEDEDEDEEEL) are enriched in acidic residues. The span at 515-526 (KSSRSPSRRSSR) shows a compositional bias: basic residues.

This sequence belongs to the alphaherpesvirinae glycoprotein E family. As to quaternary structure, interacts with gI. Post-translationally, phosphorylated on serines within the acidic cluster. Phosphorylation determines whether endocytosed viral gE traffics to the trans-Golgi network or recycles to the cell membrane.

It localises to the virion membrane. The protein localises to the host cell membrane. Its subcellular location is the host cell junction. The protein resides in the host Golgi apparatus membrane. It is found in the host endosome membrane. Its function is as follows. In epithelial cells, the heterodimer gE/gI is required for the cell-to-cell spread of the virus, by sorting nascent virions to cell junctions. Once the virus reaches the cell junctions, virus particles can spread to adjacent cells extremely rapidly through interactions with cellular receptors that accumulate at these junctions. Implicated in basolateral spread in polarized cells. In neuronal cells, gE/gI is essential for the anterograde spread of the infection throughout the host nervous system. Together with US9, the heterodimer gE/gI is involved in the sorting and transport of viral structural components toward axon tips. In Psittacid herpesvirus 1 (isolate Amazon parrot/-/97-0001/1997) (PsHV-1), this protein is Envelope glycoprotein E (US8).